The chain runs to 1901 residues: A-kinase anchor protein 11 (1901 aa).

Serine 18, serine 422, serine 433, serine 444, and serine 448 each carry phosphoserine. A disordered region spans residues 407-443 (ALPANVRKPTPRKPESPYGNLCDAPDSPRPVKASRED). Disordered stretches follow at residues 843–864 (NPGN…SSSK) and 971–993 (LPVS…DSQN). Residues threonine 981 and threonine 1100 each carry the phosphothreonine modification. The interval 1131–1153 (EFAPATPPSTPHNSSVGSLSENE) is disordered. The span at 1141-1153 (PHNSSVGSLSENE) shows a compositional bias: polar residues. Serine 1171, serine 1176, serine 1177, serine 1242, and serine 1337 each carry phosphoserine. Threonine 1485 is subject to Phosphothreonine. A Phosphoserine modification is found at serine 1580. Positions 1650–1663 (LAEKIVAEAIEKAE) are PKA-RII subunit binding domain. Positions 1708–1805 (KEIEDFQSTE…HEDEVEGLGQ (98 aa)) are disordered. Positions 1713–1740 (FQSTESVSSQQMNLSIGDDSTGSWSNLS) are enriched in polar residues. Residues 1747-1756 (DESSSFHHLS) show a composition bias toward basic and acidic residues. The segment covering 1757–1772 (ESNGNSSSWSSLGLEG) has biased composition (low complexity). Over residues 1787-1801 (DGPDDKDEEHEDEVE) the composition is skewed to acidic residues.

This sequence belongs to the AKAP110 family. Expressed in heart, brain, lung, liver, kidney, testis and ovary. Weakly expressed in skeletal muscle, pancreas and spleen.

It is found in the cytoplasm. The protein localises to the cytoskeleton. The protein resides in the microtubule organizing center. Its subcellular location is the centrosome. Binds to type II regulatory subunits of protein kinase A and anchors/targets them. The chain is A-kinase anchor protein 11 (AKAP11) from Homo sapiens (Human).